Reading from the N-terminus, the 131-residue chain is Glycine cleavage system H protein (131 aa).

A Lipoyl-binding domain is found at 24–106; it reads TVRIGITDYA…YGEGWLVDLE (83 aa). Lysine 65 is modified (N6-lipoyllysine).

It belongs to the GcvH family. As to quaternary structure, the glycine cleavage system is composed of four proteins: P, T, L and H. It depends on (R)-lipoate as a cofactor.

In terms of biological role, the glycine cleavage system catalyzes the degradation of glycine. The H protein shuttles the methylamine group of glycine from the P protein to the T protein. In Mycobacteroides abscessus (strain ATCC 19977 / DSM 44196 / CCUG 20993 / CIP 104536 / JCM 13569 / NCTC 13031 / TMC 1543 / L948) (Mycobacterium abscessus), this protein is Glycine cleavage system H protein.